Here is a 482-residue protein sequence, read N- to C-terminus: Glutamate--tRNA ligase 1 (482 aa).

Positions 18 to 28 (PSPTGYLHLGG) match the 'HIGH' region motif. The 'KMSKS' region motif lies at 252-256 (KLSKR). Lys255 lines the ATP pocket.

It belongs to the class-I aminoacyl-tRNA synthetase family. Glutamate--tRNA ligase type 1 subfamily. Monomer.

It localises to the cytoplasm. It catalyses the reaction tRNA(Glu) + L-glutamate + ATP = L-glutamyl-tRNA(Glu) + AMP + diphosphate. Functionally, catalyzes the attachment of glutamate to tRNA(Glu) in a two-step reaction: glutamate is first activated by ATP to form Glu-AMP and then transferred to the acceptor end of tRNA(Glu). This is Glutamate--tRNA ligase 1 from Erythrobacter litoralis (strain HTCC2594).